We begin with the raw amino-acid sequence, 383 residues long: Seipin (383 aa).

Over 1–27 (MVNDPPVPALLWAQEVGHVLAGRARRL) the chain is Cytoplasmic. Residues 28-48 (MLQFGVLFCTILLLLWVSVFL) form a helical membrane-spanning segment. Residues 49-242 (YGSFYYSYMP…TCAFVGVASN (194 aa)) are Lumenal-facing. Residues Asn88 and Asn242 are each glycosylated (N-linked (GlcNAc...) asparagine). A helical transmembrane segment spans residues 243-263 (FTFLSVIVLFSYMQWVWGAVW). The Cytoplasmic segment spans residues 264–383 (PRHRFSLQVN…LRQRPTCSSS (120 aa)). A disordered region spans residues 279-383 (NSHHGAPRRI…LRQRPTCSSS (105 aa)). Ser289 bears the Phosphoserine mark. Residues 292-302 (QPGQESTQQSD) show a composition bias toward polar residues. Residues 322 to 332 (EEEKPEKRPLN) are compositionally biased toward basic and acidic residues. 2 positions are modified to phosphoserine: Ser342 and Ser345. A compositionally biased stretch (low complexity) spans 353–371 (TEANPPTSASASALAPETL).

This sequence belongs to the seipin family. Undecamer (an oligomer having eleven subunits). Oligomerization is important for its function in lipid droplet formation. Interacts with LDAF1 to form an oligomeric complex. Interacts with RAB18. Interacts with ZFYVE1 in a RAB18-dependent manner. As to expression, expressed in the paraventricular nucleus of the hypothalamus (PVN) and brainstem dorsal vagal complex (DVC) in oxytocin and catecholaminergic neurons (at protein level). Highest expression detected in subcutaneous and epididymal white adipose tissue, brown adipose tissue and testis. Also expressed in brain, skeletal muscle and adrenal gland, with lower levels detected in liver, heart, kidney, spleen, lung and small intestine. In brain, detected in piriform cortex, olfactory tubercle, islands of Calleja, lateral septal nucleus, medial septal nucleus, nucleus of the vertical limb of the diagonal band, nucleus of the horizontal limb of the diagonal band, preoptic area, paraventricular thalamic nucleus, lateral globus pallidus, supraoptic nucleus, suprachiasmatic nucleus, subfornical organ, paraventricular nucleus of the hypothalamus, zona incerta, dorsomedial nucleus of the hypothalamus, ventromedial nucleus of the hypothalamus, arcuate nucleus of the hypothalamus, basomedial amygdaloid nucleus, medial amygdaloid nucleus, medial habenular, pyramidal cell layer of the hippocampus, granular layer of the dentate gyrus, posterior hypothalamus, supramammilliary nucleus, premammillary nucleus, nucleus of Darkschewitsch, Edinger-Westphal nucleus, ventral tegmental area, dorsal raphe nucleus, periaqueductal gray, median raphe nucleus, lateral parabrachial nucleus, dorsal tegmental nucleus, laterodorsal tegmental nucleus, locus coeruleus, Barrington's nucleus, medial vestibular nucleus, ambiguous nucleus, dorsal vagal complex and hypoglossal nucleus.

The protein resides in the endoplasmic reticulum membrane. It is found in the lipid droplet. Plays a crucial role in the formation of lipid droplets (LDs) which are storage organelles at the center of lipid and energy homeostasis. In association with LDAF1, defines the sites of LD formation in the ER. Also required for growth and maturation of small nascent LDs into larger mature LDs. Mediates the formation and/or stabilization of endoplasmic reticulum-lipid droplets (ER-LD) contacts, facilitating protein and lipid delivery from the ER into growing LDs. Regulates the maturation of ZFYVE1-positive nascent LDs and the function of the RAB18-ZFYVE1 complex in mediating the formation of ER-LD contacts. Binds anionic phospholipids including phosphatidic acid. Plays an important role in the differentiation and development of adipocytes. In Mus musculus (Mouse), this protein is Seipin.